Here is a 402-residue protein sequence, read N- to C-terminus: Beta-peptidyl aminopeptidase BapA (402 aa).

The N-terminal stretch at 1–29 (MTSTQRLWSGALPLLTALIVSIAATASLA) is a signal peptide. Residue serine 279 is the Nucleophile of the active site. Residues serine 317 and glutamate 319 each act as proton donor/acceptor in the active site.

Belongs to the peptidase S58 family. In terms of assembly, heterooctamer of 4 heterodimers ((alpha:beta)4); each heterodimer is composed of an alpha subunit and a beta subunit processed from the same precursor. In terms of processing, autoproteolytic processing to generate the alpha and beta subunit is required for self-activation and is proposed to use a similar mechanism as substrate cleavage.

It is found in the periplasm. The catalysed reaction is Cleaves N-terminal beta-homoamino acids from peptides composed of 2 to 6 amino acids.. Its activity is regulated as follows. Inhibited by AEBSF (4-(2-aminoethyl)benzenesulfonyl fluoride, Pefabloc SC), ampicillin and AMP(hyd) (ampillicin-derived penicilloic acid). Its function is as follows. Beta-aminopeptidase that can cleave synthetic beta-peptides which consist of backbone-elongated beta-amino acid residues that are not processed by common proteolytic enzymes. Can cleave the beta-peptides beta-homoVal-beta-homoAla-beta-homoLeu and beta-homoAla-beta-homoLeu. Requires a beta-amino acid at the N-terminus of peptide substrates and cleaves the peptide bond between the N-terminal beta-amino acid and the amino acid at the second position of tripeptidic substrates of the general structure H-betahXaa-Ile-betahTyr-OH according to the following preferences with regard to the side chain of the N-terminal beta-amino acid: aliphatic and aromatic &gt; OH-containing &gt; hydrogen, basic and polar. The protein is Beta-peptidyl aminopeptidase BapA of Sphingosinicella xenopeptidilytica.